The following is a 439-amino-acid chain: Rhodopsin (439 aa).

A glycan (N-linked (GlcNAc...) asparagine) is linked at asparagine 1. Topologically, residues 1 to 26 are extracellular; it reads NETWWYNPYMDIHSHWKQFDQVPAAV. Residues 27–51 traverse the membrane as a helical segment; the sequence is YYSLGIFIAICGIIGCAGNGIVIYL. Residues 52 to 63 lie on the Cytoplasmic side of the membrane; sequence FTKTKSLQTPAN. Residues 64-90 form a helical membrane-spanning segment; it reads MFIINLAFSDFTFSLVNGFPMMTISCF. Residues 91–102 lie on the Extracellular side of the membrane; sequence LKHWVFGQAACK. Cysteine 101 and cysteine 179 are disulfide-bonded. The chain crosses the membrane as a helical span at residues 103 to 124; sequence VYGLIGGIFGLTSIMTMTMISI. A 'Ionic lock' involved in activated form stabilization motif is present at residues 125–127; that stretch reads DRY. The Cytoplasmic segment spans residues 125–144; the sequence is DRYNVIRRPMSASKKMSHRK. Residues 145 to 165 traverse the membrane as a helical segment; the sequence is AFIMIVFVWIWSTIWAIGPIF. Topologically, residues 166–192 are extracellular; the sequence is GWGAYQLEGVLCNCSFDYITRDASTRS. Residues 193-217 traverse the membrane as a helical segment; it reads NIVCMYIFAFMFPIVVIFFCYFNIV. Residues 218–254 are Cytoplasmic-facing; sequence MSVSNHEKEMAAMAKRLNAKELRKAQAGASAEMKLAK. A helical membrane pass occupies residues 255–276; it reads ISIVIVTQSLLSWSPYAIVALL. The Extracellular segment spans residues 277 to 286; sequence AQFGPIEWVT. Residues 287 to 308 traverse the membrane as a helical segment; that stretch reads PYAAQLPVMFAKASAIHNPMIY. The residue at position 298 (lysine 298) is an N6-(retinylidene)lysine. Over 309-439 the chain is Cytoplasmic; it reads SVSHPKFREA…PQAAPPQGVD (131 aa). 2 S-palmitoyl cysteine lipidation sites follow: cysteine 329 and cysteine 330. The span at 369–381 shows a compositional bias: low complexity; sequence MMQKMQAQQQQQP. The segment at 369–439 is disordered; the sequence is MMQKMQAQQQ…PQAAPPQGVD (71 aa). Residues 382 to 433 show a composition bias toward pro residues; sequence AYPPQGYPPQGYPPPPPQGYPPQGYPPQGYPPQGYPPPPQGPPPQGPPPQAA.

It belongs to the G-protein coupled receptor 1 family. Opsin subfamily. Contains one covalently linked retinal chromophore. Upon light absorption, the covalently bound 11-cis-retinal is converted to all-trans-retinal. After hydrolysis of the Schiff base and release of the covalently bound all-trans-retinal, active rhodopsin is regenerated by binding of a fresh molecule of 11-cis-retinal.

It is found in the cell projection. It localises to the rhabdomere membrane. In terms of biological role, photoreceptor required for image-forming vision at low light intensity. Light-induced isomerization of 11-cis to all-trans retinal triggers a conformational change that activates signaling via G-proteins. Signaling mediates the activation of phospholipase C. Subsequent receptor phosphorylation mediates displacement of the bound G-protein alpha subunit by arrestin and terminates signaling. The sequence is that of Rhodopsin (RHO) from Alloteuthis subulata (Squid).